We begin with the raw amino-acid sequence, 302 residues long: GTPase Era (302 aa).

In terms of domain architecture, Era-type G spans 4–171 (KAGFVALVGR…KEKIVSLLPE (168 aa)). A G1 region spans residues 12–19 (GRTNVGKS). 12–19 (GRTNVGKS) serves as a coordination point for GTP. The G2 stretch occupies residues 38–42 (QTTRN). Residues 59–62 (DTPG) form a G3 region. Residues 59-63 (DTPGI) and 121-124 (NKID) each bind GTP. The segment at 121–124 (NKID) is G4. The segment at 150-152 (ISA) is G5. Residues 202-280 (LEEEVPHGVY…FLDLWVKTRK (79 aa)) form the KH type-2 domain.

Belongs to the TRAFAC class TrmE-Era-EngA-EngB-Septin-like GTPase superfamily. Era GTPase family. In terms of assembly, monomer.

The protein resides in the cytoplasm. It is found in the cell membrane. Its function is as follows. An essential GTPase that binds both GDP and GTP, with rapid nucleotide exchange. Plays a role in 16S rRNA processing and 30S ribosomal subunit biogenesis and possibly also in cell cycle regulation and energy metabolism. The protein is GTPase Era of Thermoanaerobacter pseudethanolicus (strain ATCC 33223 / 39E) (Clostridium thermohydrosulfuricum).